A 149-amino-acid chain; its full sequence is Large ribosomal subunit protein bL9 (149 aa).

It belongs to the bacterial ribosomal protein bL9 family.

Binds to the 23S rRNA. The sequence is that of Large ribosomal subunit protein bL9 from Klebsiella pneumoniae subsp. pneumoniae (strain ATCC 700721 / MGH 78578).